A 275-amino-acid chain; its full sequence is Thiazole synthase (275 aa).

K116 (schiff-base intermediate with DXP) is an active-site residue. 1-deoxy-D-xylulose 5-phosphate contacts are provided by residues G177, 203-204 (AG), and 225-226 (NT).

This sequence belongs to the ThiG family. As to quaternary structure, homotetramer. Forms heterodimers with either ThiH or ThiS.

It localises to the cytoplasm. The enzyme catalyses [ThiS sulfur-carrier protein]-C-terminal-Gly-aminoethanethioate + 2-iminoacetate + 1-deoxy-D-xylulose 5-phosphate = [ThiS sulfur-carrier protein]-C-terminal Gly-Gly + 2-[(2R,5Z)-2-carboxy-4-methylthiazol-5(2H)-ylidene]ethyl phosphate + 2 H2O + H(+). It functions in the pathway cofactor biosynthesis; thiamine diphosphate biosynthesis. Functionally, catalyzes the rearrangement of 1-deoxy-D-xylulose 5-phosphate (DXP) to produce the thiazole phosphate moiety of thiamine. Sulfur is provided by the thiocarboxylate moiety of the carrier protein ThiS. In vitro, sulfur can be provided by H(2)S. This Acaryochloris marina (strain MBIC 11017) protein is Thiazole synthase.